A 277-amino-acid chain; its full sequence is Small ribosomal subunit protein uS3 (277 aa).

In terms of domain architecture, KH type-2 spans 43-111; it reads IRKVMNKDLE…QVQLNIFEVK (69 aa). The interval 216-277 is disordered; that stretch reads FEEQQAQQGN…EAAVEPETKE (62 aa). Basic and acidic residues predominate over residues 264 to 277; sequence EVSKEAAVEPETKE.

The protein belongs to the universal ribosomal protein uS3 family. As to quaternary structure, part of the 30S ribosomal subunit. Forms a tight complex with proteins S10 and S14.

Its function is as follows. Binds the lower part of the 30S subunit head. Binds mRNA in the 70S ribosome, positioning it for translation. This Bifidobacterium animalis subsp. lactis (strain AD011) protein is Small ribosomal subunit protein uS3.